Consider the following 558-residue polypeptide: Zeta-carotene desaturase, chloroplastic/chromoplastic (558 aa).

A chloroplast and chromoplast-targeting transit peptide spans 1-27 (MASSVVFAATGSLSVPPLKSRRFYVNS).

This sequence belongs to the zeta carotene desaturase family. The cofactor is decylplastoquinone. Requires 6-decylubiquinone as cofactor. As to expression, highly expressed in leaves. Expressed at low levels in flowers and siliques.

The protein resides in the plastid. Its subcellular location is the chloroplast. It is found in the chromoplast. The enzyme catalyses 9,9'-di-cis-zeta-carotene + 2 a quinone = 7,7',9,9'-tetra-cis-lycopene + 2 a quinol. It functions in the pathway carotenoid biosynthesis; lycopene biosynthesis. Plays a crucial role in plant growth and development. Is essential for the biosynthesis of carotenoids. Carotenoids are involved in different physiological processes, including coloration, photoprotection, biosynthesis of abscisic acid (ABA) and chloroplast biogenesis. Catalyzes the conversion of zeta-carotene to lycopene via the intermediary of neurosporene. It carries out two consecutive desaturations (introduction of double bonds) at positions C-7 and C-7'. Shows stereoselectivity toward trans C15-C15'zeta-carotene double bond. The zeta-carotene produced by the phytoene desaturase PDS has a C15-C15' double bond in the cis configuration and it requires isomerization before being recognized as substrate by ZDS. The main product is 7,9,7',9'-tetra-cis-lycopene (pro-lycopene). The protein is Zeta-carotene desaturase, chloroplastic/chromoplastic of Arabidopsis thaliana (Mouse-ear cress).